We begin with the raw amino-acid sequence, 163 residues long: MSQKIGHSGLAFARLWHHVDVARDKRTLGRLASAIAITLIGRHKPVYHPSQDCGDYVVVTNCQKIRVTGKKFEQKTYWSHSGRPGQLKLQTMNKVVADKGFGEILKKAVSGMLPKNKLRKQRLDRLKVFDGSENPYKQNITAFAHEQSSIPEPLKESIFNQLK.

Serine 2 is subject to N-acetylserine. The propeptide occupies serine 2–lysine 4.

It belongs to the universal ribosomal protein uL13 family. Component of the mitochondrial large ribosomal subunit (mt-LSU). Mature yeast 74S mitochondrial ribosomes consist of a small (37S) and a large (54S) subunit. The 37S small subunit contains a 15S ribosomal RNA (15S mt-rRNA) and 34 different proteins. The 54S large subunit contains a 21S rRNA (21S mt-rRNA) and 46 different proteins.

It localises to the mitochondrion. Component of the mitochondrial ribosome (mitoribosome), a dedicated translation machinery responsible for the synthesis of mitochondrial genome-encoded proteins, including at least some of the essential transmembrane subunits of the mitochondrial respiratory chain. The mitoribosomes are attached to the mitochondrial inner membrane and translation products are cotranslationally integrated into the membrane. The chain is Large ribosomal subunit protein uL13m (MRPL23) from Saccharomyces cerevisiae (strain ATCC 204508 / S288c) (Baker's yeast).